The sequence spans 1048 residues: NACHT, LRR and PYD domains-containing protein 8 (1048 aa).

Positions 1–23 are disordered; the sequence is MSDVNPPSDTPIPFSSSSTHSSH. The segment covering 11 to 23 has biased composition (low complexity); it reads PIPFSSSSTHSSH. The Pyrin domain maps to 33-131; that stretch reads PGSPCENGVM…NAILPTLEPE (99 aa). Residues 204–527 form the NACHT domain; the sequence is KTVAIQGAPG…FYVLCFPQRL (324 aa). ATP is bound at residue 210-217; it reads GAPGIGKT. LRR repeat units follow at residues 815–838, 839–861, 866–890, 923–950, and 980–1007; these read NGHLKTLILRKNSLENCGAYYLSV, AQLERLSIENCNLTQLTCESLAS, SKMLTHLSLAENALKDEGAKHIWNA, NKTLKSLDLSFNSLKDDGVILLCEALKN, and NQHLRHLDLSKNAIGVYGILTLCEAFSS. Positions 1029 to 1048 are disordered; the sequence is PTPHPPDFTGKSDCLSQINP.

This sequence belongs to the NLRP family.

Its subcellular location is the cytoplasm. Involved in inflammation. This Homo sapiens (Human) protein is NACHT, LRR and PYD domains-containing protein 8 (NLRP8).